The following is a 229-amino-acid chain: Uracil-DNA glycosylase (229 aa).

Catalysis depends on Asp70, which acts as the Proton acceptor.

Belongs to the uracil-DNA glycosylase (UDG) superfamily. UNG family.

It is found in the cytoplasm. The catalysed reaction is Hydrolyzes single-stranded DNA or mismatched double-stranded DNA and polynucleotides, releasing free uracil.. Excises uracil residues from the DNA which can arise as a result of misincorporation of dUMP residues by DNA polymerase or due to deamination of cytosine. The protein is Uracil-DNA glycosylase of Chlamydia felis (strain Fe/C-56) (Chlamydophila felis).